The following is a 164-amino-acid chain: Lipocalin-like 1 protein (164 aa).

Belongs to the calycin superfamily. Lipocalin family.

In Homo sapiens (Human), this protein is Lipocalin-like 1 protein (LCNL1).